Here is a 936-residue protein sequence, read N- to C-terminus: Isoleucine--tRNA ligase (936 aa).

A 'HIGH' region motif is present at residues 58–68 (PYANGRAHLGT). An L-isoleucyl-5'-AMP-binding site is contributed by glutamate 561. The 'KMSKS' region signature appears at 602–606 (KMSKS). Lysine 605 provides a ligand contact to ATP. Zn(2+) contacts are provided by cysteine 899, cysteine 902, cysteine 919, and cysteine 922.

This sequence belongs to the class-I aminoacyl-tRNA synthetase family. IleS type 1 subfamily. In terms of assembly, monomer. It depends on Zn(2+) as a cofactor.

It localises to the cytoplasm. It catalyses the reaction tRNA(Ile) + L-isoleucine + ATP = L-isoleucyl-tRNA(Ile) + AMP + diphosphate. Catalyzes the attachment of isoleucine to tRNA(Ile). As IleRS can inadvertently accommodate and process structurally similar amino acids such as valine, to avoid such errors it has two additional distinct tRNA(Ile)-dependent editing activities. One activity is designated as 'pretransfer' editing and involves the hydrolysis of activated Val-AMP. The other activity is designated 'posttransfer' editing and involves deacylation of mischarged Val-tRNA(Ile). The protein is Isoleucine--tRNA ligase of Coxiella burnetii (strain RSA 331 / Henzerling II).